A 95-amino-acid polypeptide reads, in one-letter code: MVYIANGQVLDGQSRSPWRLSFLTDMFWGITDFIVMFFQSIIHPNVTRRGCQNSSSRTRFDDGRGPPGNPRRRMGRIDHNSGPNAPPMSGGGUGR.

A helical transmembrane segment spans residues 20–42; the sequence is LSFLTDMFWGITDFIVMFFQSII. Residues 48-95 form a disordered region; the sequence is RRGCQNSSSRTRFDDGRGPPGNPRRRMGRIDHNSGPNAPPMSGGGUGR. A non-standard amino acid (selenocysteine) is located at residue U93.

Belongs to the selenoprotein K family.

It is found in the endoplasmic reticulum membrane. The protein resides in the cell membrane. In terms of biological role, required for Ca(2+) flux in immune cells and plays a role in T-cell proliferation and in T-cell and neutrophil migration. Involved in endoplasmic reticulum-associated degradation (ERAD) of soluble glycosylated proteins. Required for cell surface expression of CD36 and involved in macrophage uptake of low-density lipoprotein and in foam cell formation. Required for palmitoylation. This Xenopus tropicalis (Western clawed frog) protein is Selenoprotein K (selenok).